The following is a 464-amino-acid chain: Soluble pyridine nucleotide transhydrogenase (464 aa).

35 to 44 (DSRRQVGGNC) is an FAD binding site.

This sequence belongs to the class-I pyridine nucleotide-disulfide oxidoreductase family. FAD is required as a cofactor.

Its subcellular location is the cytoplasm. The catalysed reaction is NAD(+) + NADPH = NADH + NADP(+). In terms of biological role, conversion of NADPH, generated by peripheral catabolic pathways, to NADH, which can enter the respiratory chain for energy generation. This is Soluble pyridine nucleotide transhydrogenase from Pseudomonas fluorescens (strain SBW25).